Consider the following 103-residue polypeptide: Large ribosomal subunit protein bL21 (103 aa).

Belongs to the bacterial ribosomal protein bL21 family. As to quaternary structure, part of the 50S ribosomal subunit. Contacts protein L20.

In terms of biological role, this protein binds to 23S rRNA in the presence of protein L20. The sequence is that of Large ribosomal subunit protein bL21 from Acinetobacter baumannii (strain AB307-0294).